Here is a 293-residue protein sequence, read N- to C-terminus: Hydroxyquinol 1,2-dioxygenase (293 aa).

Tyr164, Tyr197, His221, and His223 together coordinate Fe cation.

It belongs to the intradiol ring-cleavage dioxygenase family. As to quaternary structure, homodimer. The cofactor is Fe(3+).

The enzyme catalyses benzene-1,2,4-triol + O2 = maleylacetate + 2 H(+). Its pathway is aromatic compound metabolism; beta-ketoadipate pathway; 3-oxoadipate from 3,4-dihydroxybenzoate: step 2/4. Inhibited by 3,5-dichlorocatechol, chlorohydroquinone and 4,5-dibromocatechol. Functionally, catalyzes the ortho-cleavage of the aromatic ring of hydroxyquinol. The sequence is that of Hydroxyquinol 1,2-dioxygenase (chqB) from Nocardioides simplex (Arthrobacter simplex).